Reading from the N-terminus, the 347-residue chain is Protein RecA (347 aa).

67–74 serves as a coordination point for ATP; that stretch reads GPESSGKT.

This sequence belongs to the RecA family. Post-translationally, the protein migrates as a 40 kDa protein in strains 69A and NCTC 11637. When overexpressed in E.coli a 38 kDa protein is made which is unable to complement the E.coli deletion mutant. It has been suggested this size difference is due to a post-translational modification.

It localises to the cytoplasm. Functionally, can catalyze the hydrolysis of ATP in the presence of single-stranded DNA, the ATP-dependent uptake of single-stranded DNA by duplex DNA, and the ATP-dependent hybridization of homologous single-stranded DNAs. It interacts with LexA causing its activation and leading to its autocatalytic cleavage. Its function is as follows. Deletion of this gene leads to the inability of the bacteria to perform homologous recombination, and markedly increases UV sensitivity. The sequence is that of Protein RecA from Helicobacter pylori (strain ATCC 700392 / 26695) (Campylobacter pylori).